The primary structure comprises 302 residues: Putative receptor-like protein 16 (302 aa).

LRR repeat units lie at residues 1-19, 20-43, and 45-70; these read MNLT…LGNM, EMIE…FLKG, and DSLI…NFFS. The stretch at 72-91 is one LRR 4; degenerate repeat; sequence LELSMDNNLFTGKIGRGLQS. LRR repeat units follow at residues 92-115, 116-140, 142-164, 166-188, 190-211, 213-234, and 235-258; these read LRSL…WFDQ, LQDL…LFNM, SLQL…ISGY, ALKV…LLGK, IIVL…INTQ, IRIL…LCAV, and RSIH…LRNA.

It belongs to the RLP family.

The polypeptide is Putative receptor-like protein 16 (Arabidopsis thaliana (Mouse-ear cress)).